The sequence spans 199 residues: NAD(P)H dehydrogenase (quinone) (199 aa).

One can recognise a Flavodoxin-like domain in the interval Met4 to Val190. FMN-binding positions include Ser10–Met15 and Thr78–Tyr80. Tyr12 is an NAD(+) binding site. Trp98 contributes to the substrate binding site. FMN is bound by residues Ser113–Gly119 and His134. The segment at Gly158–Asp181 is disordered. Residues Met163–Ala177 are compositionally biased toward polar residues.

The protein belongs to the WrbA family. It depends on FMN as a cofactor.

It carries out the reaction a quinone + NADH + H(+) = a quinol + NAD(+). It catalyses the reaction a quinone + NADPH + H(+) = a quinol + NADP(+). The sequence is that of NAD(P)H dehydrogenase (quinone) from Brucella ovis (strain ATCC 25840 / 63/290 / NCTC 10512).